The following is a 65-amino-acid chain: Small ribosomal subunit protein bS21 (65 aa).

The interval 39–65 (EKPSIKRKKKAIAARKRALKKQRKMMD) is disordered. Positions 43–65 (IKRKKKAIAARKRALKKQRKMMD) are enriched in basic residues.

Belongs to the bacterial ribosomal protein bS21 family.

This Pelobacter propionicus (strain DSM 2379 / NBRC 103807 / OttBd1) protein is Small ribosomal subunit protein bS21.